The chain runs to 266 residues: NADP-dependent mannitol dehydrogenase (266 aa).

NADP(+) is bound by residues Ser-53, Asn-107, and Lys-140. Ser-159 serves as the catalytic Proton donor. NADP(+) contacts are provided by Tyr-174, Lys-178, Ile-206, and Thr-208. The active-site Proton acceptor is the Tyr-174. Catalysis depends on Lys-178, which acts as the Lowers pKa of active site Tyr.

The protein belongs to the short-chain dehydrogenases/reductases (SDR) family. Homotetramer.

The catalysed reaction is D-mannitol + NADP(+) = D-fructose + NADPH + H(+). Functionally, D-mannitol 2-dehydrogenase which is not necessary for D-mannitol catabolism. D-mannitol metabolism occurs via at least two different routes involving mannitol dehydrogenase (MDH) or mannitol 1-phosphate dehydrogenase, and the exact physiological role of mannitol dehydrogenases remains unclear. The chain is NADP-dependent mannitol dehydrogenase from Hypocrea jecorina (strain ATCC 56765 / BCRC 32924 / NRRL 11460 / Rut C-30) (Trichoderma reesei).